Reading from the N-terminus, the 263-residue chain is Complement control protein C3 (263 aa).

Residues 1 to 19 (MKVESVTFLTLLGIGCVLS) form the signal peptide. Sushi domains follow at residues 20–83 (CCTI…QCIK), 84–145 (RRCP…ICES), 146–203 (VKCQ…TCQI), and 204–263 (VKCP…KCVR). 8 disulfide bridges follow: C21–C70, C54–C81, C86–C126, C112–C143, C148–C190, C176–C201, C206–C248, and C234–C261.

Belongs to the receptors of complement activation (RCA) family. As to quaternary structure, heterodimer with A56 protein; disulfide-linked.

It localises to the virion membrane. It is found in the host cell membrane. The protein localises to the secreted. Its function is as follows. Serves to protect the virus against complement attack by inhibiting both classical and alternative pathways of complement activation. Binds C3b and C4b. The sequence is that of Complement control protein C3 from Vaccinia virus (strain Copenhagen) (VACV).